Here is a 287-residue protein sequence, read N- to C-terminus: Bifunctional protein FolD (287 aa).

Residues 160–162 (GRS), S189, and T230 contribute to the NADP(+) site.

It belongs to the tetrahydrofolate dehydrogenase/cyclohydrolase family. In terms of assembly, homodimer.

It catalyses the reaction (6R)-5,10-methylene-5,6,7,8-tetrahydrofolate + NADP(+) = (6R)-5,10-methenyltetrahydrofolate + NADPH. It carries out the reaction (6R)-5,10-methenyltetrahydrofolate + H2O = (6R)-10-formyltetrahydrofolate + H(+). The protein operates within one-carbon metabolism; tetrahydrofolate interconversion. In terms of biological role, catalyzes the oxidation of 5,10-methylenetetrahydrofolate to 5,10-methenyltetrahydrofolate and then the hydrolysis of 5,10-methenyltetrahydrofolate to 10-formyltetrahydrofolate. In Chlamydia trachomatis serovar D (strain ATCC VR-885 / DSM 19411 / UW-3/Cx), this protein is Bifunctional protein FolD.